Here is a 396-residue protein sequence, read N- to C-terminus: Digeranylgeranylglycerophospholipid reductase (396 aa).

11 residues coordinate FAD: Gly-14, Glu-33, Cys-44, Gly-45, Gly-47, Arg-100, Ala-124, Glu-162, Asp-283, Gly-295, and Ile-296. Residues Lys-338 and Val-374 each contribute to the a 2,3-bis-O-(geranylgeranyl)-sn-glycerol 1-phospholipid site.

This sequence belongs to the geranylgeranyl reductase family. DGGGPL reductase subfamily. Monomer. Requires FAD as cofactor.

It is found in the cell membrane. The enzyme catalyses 2,3-bis-O-(phytanyl)-sn-glycerol 1-phosphate + 8 NADP(+) = 2,3-bis-O-(geranylgeranyl)-sn-glycerol 1-phosphate + 8 NADPH + 8 H(+). The catalysed reaction is 2,3-bis-O-(phytanyl)-sn-glycerol 1-phosphate + 8 NAD(+) = 2,3-bis-O-(geranylgeranyl)-sn-glycerol 1-phosphate + 8 NADH + 8 H(+). It catalyses the reaction a 2,3-bis-O-phytanyl-sn-glycerol 1-phospholipid + 8 A = a 2,3-bis-O-(geranylgeranyl)-sn-glycerol 1-phospholipid + 8 AH2. It carries out the reaction CDP-2,3-bis-O-(geranylgeranyl)-sn-glycerol + 8 AH2 = CDP-2,3-bis-O-(phytanyl)-sn-glycerol + 8 A. The enzyme catalyses archaetidylserine + 8 AH2 = 2,3-bis-O-phytanyl-sn-glycero-3-phospho-L-serine + 8 A. The protein operates within membrane lipid metabolism; glycerophospholipid metabolism. Is involved in the reduction of 2,3-digeranylgeranylglycerophospholipids (unsaturated archaeols) into 2,3-diphytanylglycerophospholipids (saturated archaeols) in the biosynthesis of archaeal membrane lipids. Catalyzes the formation of archaetidic acid (2,3-di-O-phytanyl-sn-glyceryl phosphate) from 2,3-di-O-geranylgeranylglyceryl phosphate (DGGGP) via the hydrogenation of each double bond of the isoprenoid chains. Can use both NADH and NADPH as electron donors. Also catalyzes the reduction of 2,3-di-O-geranylgeranylglyceryl phosphate analogs such as 2,3-di-O-phytyl-sn-glyceryl phosphate (DPHGP), 3-O-(2,3-di-O-phytyl-sn-glycero-phospho)-sn-glycerol (DPHGPG) and 2,3-di-O-phytyl-sn-glycero-phosphoethanolamine (DPHGPE). Is not active toward 2,3-di-O-geranylgeranylglycerol. Is also probably able to reduce double bonds of geranyl groups in CDP-2,3-bis-O-(geranylgeranyl)-sn-glycerol and archaetidylserine, thus acting at various stages in the biosynthesis of archaeal membrane lipids. This chain is Digeranylgeranylglycerophospholipid reductase, found in Thermoplasma acidophilum (strain ATCC 25905 / DSM 1728 / JCM 9062 / NBRC 15155 / AMRC-C165).